Here is a 148-residue protein sequence, read N- to C-terminus: MF7 protein (148 aa).

This Myxoma virus (strain Lausanne) (MYXV) protein is MF7 protein.